A 204-amino-acid chain; its full sequence is High frequency lysogenization protein HflD homolog (204 aa).

It belongs to the HflD family.

It is found in the cytoplasm. Its subcellular location is the cell inner membrane. This chain is High frequency lysogenization protein HflD homolog, found in Xanthomonas euvesicatoria pv. vesicatoria (strain 85-10) (Xanthomonas campestris pv. vesicatoria).